The sequence spans 727 residues: Testis anion transporter 1 (727 aa).

At 1–23 (MLTIFPFLEWMCMYRLKDWLLGD) the chain is on the cytoplasmic side. Residues 24–44 (LLAGISVGLVQVPQGLTLSLL) traverse the membrane as a helical segment. Residues 45 to 47 (ARQ) lie on the Extracellular side of the membrane. The chain crosses the membrane as a helical span at residues 48–68 (LIPPLNIAYAAFCSSVIYVIF). Topologically, residues 69 to 74 (GSCHQM) are cytoplasmic. A helical membrane pass occupies residues 75–95 (SIGSFFLVSALLINVLKISPL). Topologically, residues 96 to 130 (NNGHLVMGSFLKDEFSAPSYLMGYNKSLSVVATTT) are extracellular. N120 carries N-linked (GlcNAc...) asparagine glycosylation. Residues 131–151 (FLTGIIQLIMGVLGLGFIATY) form a helical membrane-spanning segment. The Cytoplasmic segment spans residues 152–160 (LPESAMSAY). A helical transmembrane segment spans residues 161-181 (LAAVALHIMLSQLTCIFGIMI). Topologically, residues 182 to 198 (SFHAGPISFFYDIINYC) are extracellular. A helical membrane pass occupies residues 199-219 (VALPKANSTSILLFLTVVVAL). The Cytoplasmic portion of the chain corresponds to 220–235 (RINKCIRISFNQYPIE). Residues 236–256 (FPMELFLIIGFTVIGNKITMA) traverse the membrane as a helical segment. Residues 257–283 (TETSQTLIDMIPYSFLFPVTPDFSVLP) lie on the Extracellular side of the membrane. Residues 284 to 304 (KIILQAISLSLVSSFLLVFLG) traverse the membrane as a helical segment. Topologically, residues 305-360 (KKIASLHNYSVNSNQDLIAIGLCNVVSSFFRSCVFTGAVARTIIQDKSGGRQQFAS) are cytoplasmic. The chain crosses the membrane as a helical span at residues 361–381 (LVGAGVMLLLMVKMGHFFYAL). The Extracellular portion of the chain corresponds to 382 to 383 (PN). A helical membrane pass occupies residues 384 to 404 (AVLAGIILSNVVPYLETISNL). Topologically, residues 405–424 (PSLWRQDQYDCALWMMTFSS) are cytoplasmic. A helical membrane pass occupies residues 425–445 (SIFLGLDIGLIISVVSAFFIT). Residues 446-727 (SVRSHRAKIL…LPSFHLQHIF (282 aa)) are Extracellular-facing. One can recognise an STAS domain in the interval 471–722 (DYREIITIPG…NSLSRLPSFH (252 aa)). Positions 592-727 (TVSSMSQKNQ…LPSFHLQHIF (136 aa)) are interaction with RACGAP1.

This sequence belongs to the SLC26A/SulP transporter (TC 2.A.53) family. As to quaternary structure, interacts with RACGAP1. Interacts with CFTR; stimulates anion transport activity of CFTR. Post-translationally, N-glycosylated.

The protein resides in the membrane. The enzyme catalyses sulfate(out) + chloride(in) = sulfate(in) + chloride(out). The catalysed reaction is oxalate(in) + chloride(out) = oxalate(out) + chloride(in). Its function is as follows. Antiporter that mediates the exchange of sulfate and oxalate against chloride ions across a membrane. Stimulates anion transport activity of CFTR. May cooperate with CFTR in the regulation of chloride and bicarbonate ions fluxes required for activation of the ADCY10/PKA pathway during sperm motility and sperm capacitation. May play a role in sperm tail differentiation and motility and hence male fertility. The protein is Testis anion transporter 1 of Macaca fascicularis (Crab-eating macaque).